The chain runs to 89 residues: MALSVEEKAQIVTDYQQAVGDTGSPEVQVALLTANINKLQGHFKANGKDHHSRRGLIRMVNQRRKLLDYLKGKDVSRYSALIGRLGLRR.

This sequence belongs to the universal ribosomal protein uS15 family. Part of the 30S ribosomal subunit. Forms a bridge to the 50S subunit in the 70S ribosome, contacting the 23S rRNA.

One of the primary rRNA binding proteins, it binds directly to 16S rRNA where it helps nucleate assembly of the platform of the 30S subunit by binding and bridging several RNA helices of the 16S rRNA. Functionally, forms an intersubunit bridge (bridge B4) with the 23S rRNA of the 50S subunit in the ribosome. The protein is Small ribosomal subunit protein uS15 of Pseudomonas savastanoi pv. phaseolicola (strain 1448A / Race 6) (Pseudomonas syringae pv. phaseolicola (strain 1448A / Race 6)).